A 498-amino-acid polypeptide reads, in one-letter code: L-ornithine N(5)-monooxygenase (498 aa).

FAD-binding positions include 80–88 (ERQKQFAWH) and Gln-99. A substrate-binding site is contributed by Lys-104. FAD is bound at residue Val-165. NADP(+) is bound by residues 251-254 (SGQS) and Arg-276. Residues 290–293 (NEVF) and Asn-320 contribute to the substrate site. 320-322 (NYS) contacts NADP(+). 463 to 465 (SLL) contacts FAD. Ser-466 lines the substrate pocket.

The protein belongs to the lysine N(6)-hydroxylase/L-ornithine N(5)-oxygenase family. As to quaternary structure, homotetramer. Requires FAD as cofactor.

The catalysed reaction is L-ornithine + NADPH + O2 = N(5)-hydroxy-L-ornithine + NADP(+) + H2O. The enzyme catalyses L-ornithine + NADH + O2 = N(5)-hydroxy-L-ornithine + NAD(+) + H2O. The protein operates within siderophore biosynthesis. In terms of biological role, catalyzes the conversion of L-ornithine to N(5)-hydroxyornithine, the first step in the biosynthesis of all hydroxamate-containing siderophores, such as the secreted triacetylfusarinine C (TAFC) involved in iron uptake and the intracellular iron storage compound desferriferricrocin (DFFC). The chain is L-ornithine N(5)-monooxygenase from Emericella nidulans (strain FGSC A4 / ATCC 38163 / CBS 112.46 / NRRL 194 / M139) (Aspergillus nidulans).